Consider the following 239-residue polypeptide: Uridylate kinase (239 aa).

10–13 (KISG) contacts ATP. The segment at 18 to 23 (GESGYG) is involved in allosteric activation by GTP. G52 lines the UMP pocket. Positions 53 and 57 each coordinate ATP. UMP-binding positions include D72 and 133–140 (TGNPYFTT). ATP-binding residues include T160, Y166, and D169.

This sequence belongs to the UMP kinase family. In terms of assembly, homohexamer.

It localises to the cytoplasm. The enzyme catalyses UMP + ATP = UDP + ADP. The protein operates within pyrimidine metabolism; CTP biosynthesis via de novo pathway; UDP from UMP (UMPK route): step 1/1. With respect to regulation, allosterically activated by GTP. Inhibited by UTP. Its function is as follows. Catalyzes the reversible phosphorylation of UMP to UDP. The polypeptide is Uridylate kinase (Chlorobaculum tepidum (strain ATCC 49652 / DSM 12025 / NBRC 103806 / TLS) (Chlorobium tepidum)).